Reading from the N-terminus, the 225-residue chain is C-reactive protein (225 aa).

Residues 1 to 19 form the signal peptide; the sequence is MEKLLWCLLIMISFSRTFG. The region spanning 24-225 is the Pentraxin (PTX) domain; sequence FKKAFVFPKE…DVFIKPQLWS (202 aa). A disulfide bridge connects residues cysteine 55 and cysteine 116. Positions 80, 157, 158, 159, and 169 each coordinate Ca(2+).

Belongs to the pentraxin family. Homopentamer. Pentraxin (or pentaxin) have a discoid arrangement of 5 non-covalently bound subunits. Interacts with FCN1; may regulate monocyte activation by FCN1. The cofactor is Ca(2+). In terms of tissue distribution, found in plasma.

The protein localises to the secreted. Its function is as follows. Displays several functions associated with host defense: it promotes agglutination, bacterial capsular swelling, phagocytosis and complement fixation through its calcium-dependent binding to phosphorylcholine. Can interact with DNA and histones and may scavenge nuclear material released from damaged circulating cells. The chain is C-reactive protein (Crp) from Mus musculus (Mouse).